The following is a 390-amino-acid chain: Elongation factor Tu 1 (390 aa).

Positions 10 to 201 constitute a tr-type G domain; the sequence is KPHVNVGTIG…LDEYVAVPPR (192 aa). Residues 19 to 26 are G1; the sequence is GHVDHGKT. 19–26 serves as a coordination point for GTP; sequence GHVDHGKT. Position 26 (Thr26) interacts with Mg(2+). The G2 stretch occupies residues 55–59; that stretch reads GITIA. The tract at residues 76 to 79 is G3; sequence DCPG. GTP is bound by residues 76–80 and 131–134; these read DCPGH and NKAD. A G4 region spans residues 131 to 134; it reads NKAD. The segment at 168–170 is G5; sequence SAL.

It belongs to the TRAFAC class translation factor GTPase superfamily. Classic translation factor GTPase family. EF-Tu/EF-1A subfamily. In terms of assembly, monomer.

Its subcellular location is the cytoplasm. It catalyses the reaction GTP + H2O = GDP + phosphate + H(+). Functionally, GTP hydrolase that promotes the GTP-dependent binding of aminoacyl-tRNA to the A-site of ribosomes during protein biosynthesis. The protein is Elongation factor Tu 1 of Wolbachia pipientis wMel.